The following is a 447-amino-acid chain: Sporulation protein YpeB (447 aa).

The protein belongs to the YpeB family.

Functionally, required for spore cortex hydrolysis during germination. Appears to be required for either expression, localization, activation or function of SleB. This Oceanobacillus iheyensis (strain DSM 14371 / CIP 107618 / JCM 11309 / KCTC 3954 / HTE831) protein is Sporulation protein YpeB.